Reading from the N-terminus, the 148-residue chain is Deoxyuridine 5'-triphosphate nucleotidohydrolase (148 aa).

Residues 68–70 (RSG), Asn81, 85–87 (TID), and Lys95 each bind substrate.

This sequence belongs to the dUTPase family. It depends on Mg(2+) as a cofactor.

It carries out the reaction dUTP + H2O = dUMP + diphosphate + H(+). Its pathway is pyrimidine metabolism; dUMP biosynthesis; dUMP from dCTP (dUTP route): step 2/2. In terms of biological role, this enzyme is involved in nucleotide metabolism: it produces dUMP, the immediate precursor of thymidine nucleotides and it decreases the intracellular concentration of dUTP so that uracil cannot be incorporated into DNA. This chain is Deoxyuridine 5'-triphosphate nucleotidohydrolase, found in Rickettsia canadensis (strain McKiel).